Consider the following 77-residue polypeptide: Protein RADIALIS-like 4 (77 aa).

The SANT domain maps to 6–61; the sequence is MSTSSWTAREDKQFEMALAKFDKDTPDRWQKIARAVGGKSTEEVKRHYELLLRDVN.

As to expression, expressed just outside the vascular bundles in the rosette stem and the leaf traces. Not detected in floral primordia.

It localises to the nucleus. Functionally, probable transcription factor. This Arabidopsis thaliana (Mouse-ear cress) protein is Protein RADIALIS-like 4 (RL4).